The primary structure comprises 208 residues: U11/U12 small nuclear ribonucleoprotein 35 kDa protein (208 aa).

Positions 50–128 constitute an RRM domain; it reads LTLFVARLNP…YELLVDVEQE (79 aa). A disordered region spans residues 133 to 208; the sequence is GWRPRRLGGG…TEDRTHRHTY (76 aa). Over residues 171 to 208 the composition is skewed to basic and acidic residues; that stretch reads RPAEPRGRETERERDRRDYRDRRHERTHTEDRTHRHTY.

It localises to the nucleus. The polypeptide is U11/U12 small nuclear ribonucleoprotein 35 kDa protein (snrnp35) (Danio rerio (Zebrafish)).